Consider the following 132-residue polypeptide: MGRDTIADIITSIRNADMDKKGTVRIASTNITETIVKILLREGFIENVRKHRENDQFFLVSTLRHRRNRKGPYRTILKRISRPGLRIYSNYQRIPRILGGMGIVILSTSRGIMTDREARLEGIGGEILCYIW.

The protein belongs to the universal ribosomal protein uS8 family. Part of the 30S ribosomal subunit.

It localises to the plastid. The protein localises to the chloroplast. One of the primary rRNA binding proteins, it binds directly to 16S rRNA central domain where it helps coordinate assembly of the platform of the 30S subunit. In Nandina domestica (Heavenly bamboo), this protein is Small ribosomal subunit protein uS8c (rps8).